We begin with the raw amino-acid sequence, 207 residues long: Outer-membrane lipoprotein LolB (207 aa).

A signal peptide spans 1–21 (MPLPDFRFIRLLPLAALVLTA). A lipid anchor (N-palmitoyl cysteine) is attached at cysteine 22. A lipid anchor (S-diacylglycerol cysteine) is attached at cysteine 22.

Belongs to the LolB family. In terms of assembly, monomer.

The protein localises to the cell outer membrane. In terms of biological role, plays a critical role in the incorporation of lipoproteins in the outer membrane after they are released by the LolA protein. In Escherichia coli O6:K15:H31 (strain 536 / UPEC), this protein is Outer-membrane lipoprotein LolB.